The following is a 101-amino-acid chain: MNQELRIRLESYDHRLLDDTVKTIVNISNSTGSKLRGPIPLPTKKEIFTILRSPHVNKSSREQFERRTHKRLIILENPQPKTMEALKRLSVPFGVEVTFKI.

The protein belongs to the universal ribosomal protein uS10 family. Part of the 30S ribosomal subunit.

Its function is as follows. Involved in the binding of tRNA to the ribosomes. The polypeptide is Small ribosomal subunit protein uS10 (Ureaplasma parvum serovar 3 (strain ATCC 27815 / 27 / NCTC 11736)).